The primary structure comprises 1197 residues: Sensor protein EvgS (1197 aa).

A signal peptide spans 1–21 (MKFLPYIFLLCCGLWSTISFA). The Cytoplasmic portion of the chain corresponds to 22–325 (DEDYIEYRGI…SMTDENGSVR (304 aa)). The helical transmembrane segment at 326 to 346 (GVMGDILNIITLQTGLNFSPI) threads the bilayer. Topologically, residues 347 to 537 (TVSHNIHAGT…TWDLYSEQFY (191 aa)) are periplasmic. The helical transmembrane segment at 538 to 558 (IVTTLSVLLVGSSLLWGFYLL) threads the bilayer. The Cytoplasmic segment spans residues 559-1197 (RSVRRRKVIQ…EIAVFCQKND (639 aa)). The region spanning 718-938 (TMSHEIRTPI…TFTITIPVEI (221 aa)) is the Histidine kinase domain. Phosphohistidine; by autocatalysis is present on His-721. The region spanning 960–1074 (SILIADDHPT…VLKTHLSQLH (115 aa)) is the Response regulatory domain. Asp-1009 bears the 4-aspartylphosphate mark. The HPt domain occupies 1098-1197 (DLQLMQEILM…EIAVFCQKND (100 aa)). Phosphohistidine is present on His-1137.

Post-translationally, activation requires a sequential transfer of a phosphate group from a His in the primary transmitter domain, to an Asp in the receiver domain and to a His in the secondary transmitter domain.

The protein localises to the cell inner membrane. The enzyme catalyses ATP + protein L-histidine = ADP + protein N-phospho-L-histidine.. Member of the two-component regulatory system EvgS/EvgA. Phosphorylates EvgA via a four-step phosphorelay in response to environmental signals. The polypeptide is Sensor protein EvgS (evgS) (Escherichia coli (strain K12)).